Reading from the N-terminus, the 1185-residue chain is Chromosome partition protein Smc (1185 aa).

ATP is bound at residue 32-39 (PNGSGKSN). A coiled-coil region spans residues 228–503 (SRLVKKLTIA…LQAVQERYTN (276 aa)). The disordered stretch occupies residues 300 to 323 (TQGQQGVDAERRQNQQSEQERLTA). The span at 307–320 (DAERRQNQQSEQER) shows a compositional bias: basic and acidic residues. An SMC hinge domain is found at 519 to 637 (SGVAGAVSEL…VDTLDHAMAI (119 aa)). Coiled-coil stretches lie at residues 675–928 (QQQQ…RRLE) and 989–1025 (AIDE…ADLD).

The protein belongs to the SMC family. As to quaternary structure, homodimer.

Its subcellular location is the cytoplasm. Functionally, required for chromosome condensation and partitioning. This chain is Chromosome partition protein Smc, found in Lactiplantibacillus plantarum (strain ATCC BAA-793 / NCIMB 8826 / WCFS1) (Lactobacillus plantarum).